Here is a 199-residue protein sequence, read N- to C-terminus: Probable GTP-binding protein EngB (199 aa).

The EngB-type G domain maps to 28 to 199 (DLPEIALAGR…DSWDAILEQV (172 aa)). Residues 36 to 43 (GRSNVGKS), 63 to 67 (GKTQL), 81 to 84 (DVPG), 148 to 151 (TKAD), and 180 to 182 (FSS) each bind GTP. The Mg(2+) site is built by Ser43 and Thr65.

It belongs to the TRAFAC class TrmE-Era-EngA-EngB-Septin-like GTPase superfamily. EngB GTPase family. Mg(2+) is required as a cofactor.

In terms of biological role, necessary for normal cell division and for the maintenance of normal septation. In Streptococcus pyogenes serotype M49 (strain NZ131), this protein is Probable GTP-binding protein EngB.